Here is a 328-residue protein sequence, read N- to C-terminus: D-cysteine desulfhydrase (328 aa).

Lysine 51 is subject to N6-(pyridoxal phosphate)lysine.

The protein belongs to the ACC deaminase/D-cysteine desulfhydrase family. Homodimer. The cofactor is pyridoxal 5'-phosphate.

It carries out the reaction D-cysteine + H2O = hydrogen sulfide + pyruvate + NH4(+) + H(+). In terms of biological role, catalyzes the alpha,beta-elimination reaction of D-cysteine and of several D-cysteine derivatives. It could be a defense mechanism against D-cysteine. This chain is D-cysteine desulfhydrase, found in Escherichia coli (strain UTI89 / UPEC).